Consider the following 342-residue polypeptide: tRNA dimethylallyltransferase (342 aa).

An ATP-binding site is contributed by 39–46 (GPTGSGKT). 41-46 (TGSGKT) contributes to the substrate binding site. The segment at 64–67 (DSMQ) is interaction with substrate tRNA.

This sequence belongs to the IPP transferase family. As to quaternary structure, monomer. Mg(2+) is required as a cofactor.

It carries out the reaction adenosine(37) in tRNA + dimethylallyl diphosphate = N(6)-dimethylallyladenosine(37) in tRNA + diphosphate. Catalyzes the transfer of a dimethylallyl group onto the adenine at position 37 in tRNAs that read codons beginning with uridine, leading to the formation of N6-(dimethylallyl)adenosine (i(6)A). This chain is tRNA dimethylallyltransferase, found in Chlamydia pneumoniae (Chlamydophila pneumoniae).